We begin with the raw amino-acid sequence, 736 residues long: Prolyl oligopeptidase dbiP (736 aa).

Active-site charge relay system residues include serine 572, aspartate 656, and histidine 692.

Belongs to the peptidase S9A family. As to quaternary structure, monomer.

The catalysed reaction is Hydrolysis of Pro-|-Xaa &gt;&gt; Ala-|-Xaa in oligopeptides.. It participates in mycotoxin biosynthesis. In terms of biological role, prolyl oligopeptidase; part of the gene cluster that mediates the biosynthesis of dendrothelin A, a highly methylated cyclic dodecapeptide showing slight nematodicidal activity. Excises and catalyzes the macrocyclization of the methylated core peptide of dbiMA to yield dendrothelin A. DbiP works in a two-step fashion with an initial cleavage at the N-terminus, followed by a second cleavage at the C-terminus of the core peptide. According to this mechanism, the free N-terminus of the core peptide, generated by the first cleavage, attacks the covalent intermediate of the second cleavage, which results in macrocyclization of the core peptide. The polypeptide is Prolyl oligopeptidase dbiP (Dendrothele bispora (strain CBS 962.96)).